A 288-amino-acid polypeptide reads, in one-letter code: Polyamine aminopropyltransferase (288 aa).

The PABS domain maps to 9-238; it reads ETLHDQFGQY…GIMTFAWATD (230 aa). Glutamine 33 serves as a coordination point for S-methyl-5'-thioadenosine. Spermidine is bound by residues histidine 64 and aspartate 88. S-methyl-5'-thioadenosine contacts are provided by residues glutamate 108 and 140 to 141; that span reads DG. The active-site Proton acceptor is aspartate 158. 158-161 provides a ligand contact to spermidine; the sequence is DCTD. Proline 165 serves as a coordination point for S-methyl-5'-thioadenosine.

The protein belongs to the spermidine/spermine synthase family. In terms of assembly, homodimer or homotetramer.

It is found in the cytoplasm. The catalysed reaction is S-adenosyl 3-(methylsulfanyl)propylamine + putrescine = S-methyl-5'-thioadenosine + spermidine + H(+). Its pathway is amine and polyamine biosynthesis; spermidine biosynthesis; spermidine from putrescine: step 1/1. Catalyzes the irreversible transfer of a propylamine group from the amino donor S-adenosylmethioninamine (decarboxy-AdoMet) to putrescine (1,4-diaminobutane) to yield spermidine. In Escherichia fergusonii (strain ATCC 35469 / DSM 13698 / CCUG 18766 / IAM 14443 / JCM 21226 / LMG 7866 / NBRC 102419 / NCTC 12128 / CDC 0568-73), this protein is Polyamine aminopropyltransferase.